The following is a 36-amino-acid chain: Dolichyl-diphosphooligosaccharide--protein glycosyltransferase subunit OST4 (36 aa).

Residues 1–9 (MISDEQLNS) lie on the Lumenal side of the membrane. A helical membrane pass occupies residues 10-28 (LAITFGIVMMTLIVIYHAV). The Cytoplasmic portion of the chain corresponds to 29–36 (DSTMSPKN).

This sequence belongs to the OST4 family. Component of the oligosaccharyltransferase (OST) complex, which appears to exist in two assemblies comprising OST1, OST2, OST4, OST5, STT3, SWP1, WPB1, and either OST3 or OST6. OST assembly occurs through the formation of 3 subcomplexes. Subcomplex 1 contains OST1 and OST5, subcomplex 2 contains STT3, OST3, and OST4, and subcomplex 3 contains OST2, WBP1, and SWP1. Interacts with SEC61, SBH1 and SSS1.

The protein resides in the endoplasmic reticulum membrane. Its pathway is protein modification; protein glycosylation. Subunit of the oligosaccharyl transferase (OST) complex that catalyzes the initial transfer of a defined glycan (Glc(3)Man(9)GlcNAc(2) in eukaryotes) from the lipid carrier dolichol-pyrophosphate to an asparagine residue within an Asn-X-Ser/Thr consensus motif in nascent polypeptide chains, the first step in protein N-glycosylation. N-glycosylation occurs cotranslationally and the complex associates with the Sec61 complex at the channel-forming translocon complex that mediates protein translocation across the endoplasmic reticulum (ER). All subunits are required for a maximal enzyme activity. This is Dolichyl-diphosphooligosaccharide--protein glycosyltransferase subunit OST4 (OST4) from Saccharomyces cerevisiae (strain ATCC 204508 / S288c) (Baker's yeast).